The chain runs to 197 residues: Adenylate kinase (197 aa).

12 to 17 (GSGKTT) serves as a coordination point for ATP. The NMP stretch occupies residues 34–63 (STGDMLREEVASGSELGKTIESYIAKGALV). Residues Thr35, Arg40, 61 to 63 (ALV), 88 to 91 (GYPR), and Gln95 each bind AMP. The segment at 130–144 (GRRAEAAPGEERSDD) is LID. Position 131 (Arg131) interacts with ATP. 2 residues coordinate AMP: Arg141 and Arg152. Arg180 contacts ATP.

This sequence belongs to the adenylate kinase family. As to quaternary structure, monomer.

It localises to the cytoplasm. It carries out the reaction AMP + ATP = 2 ADP. It functions in the pathway purine metabolism; AMP biosynthesis via salvage pathway; AMP from ADP: step 1/1. Catalyzes the reversible transfer of the terminal phosphate group between ATP and AMP. Plays an important role in cellular energy homeostasis and in adenine nucleotide metabolism. The sequence is that of Adenylate kinase from Sulfurovum sp. (strain NBC37-1).